A 152-amino-acid chain; its full sequence is Deoxyuridine 5'-triphosphate nucleotidohydrolase (152 aa).

Substrate is bound by residues 71–73 (RSG), Asn-84, 88–90 (LID), and Met-98.

The protein belongs to the dUTPase family. It depends on Mg(2+) as a cofactor.

It catalyses the reaction dUTP + H2O = dUMP + diphosphate + H(+). It participates in pyrimidine metabolism; dUMP biosynthesis; dUMP from dCTP (dUTP route): step 2/2. Functionally, this enzyme is involved in nucleotide metabolism: it produces dUMP, the immediate precursor of thymidine nucleotides and it decreases the intracellular concentration of dUTP so that uracil cannot be incorporated into DNA. The polypeptide is Deoxyuridine 5'-triphosphate nucleotidohydrolase (Pectobacterium carotovorum subsp. carotovorum (strain PC1)).